Consider the following 452-residue polypeptide: Pup--protein ligase (452 aa).

Glutamate 9 contributes to the Mg(2+) binding site. An ATP-binding site is contributed by arginine 53. Tyrosine 55 provides a ligand contact to Mg(2+). The active-site Proton acceptor is the aspartate 57. Glutamate 63 contacts Mg(2+). Residues threonine 66 and tryptophan 419 each coordinate ATP.

The protein belongs to the Pup ligase/Pup deamidase family. Pup-conjugating enzyme subfamily.

It catalyses the reaction ATP + [prokaryotic ubiquitin-like protein]-L-glutamate + [protein]-L-lysine = ADP + phosphate + N(6)-([prokaryotic ubiquitin-like protein]-gamma-L-glutamyl)-[protein]-L-lysine.. The protein operates within protein degradation; proteasomal Pup-dependent pathway. Its pathway is protein modification; protein pupylation. Catalyzes the covalent attachment of the prokaryotic ubiquitin-like protein modifier Pup to the proteasomal substrate proteins, thereby targeting them for proteasomal degradation. This tagging system is termed pupylation. The ligation reaction involves the side-chain carboxylate of the C-terminal glutamate of Pup and the side-chain amino group of a substrate lysine. The sequence is that of Pup--protein ligase from Rhodococcus erythropolis (strain PR4 / NBRC 100887).